We begin with the raw amino-acid sequence, 84 residues long: Mu-conotoxin-like Cal 12.2d (84 aa).

The N-terminal stretch at M1–L19 is a signal peptide. Positions I20–R42 are excised as a propeptide. W72 carries the post-translational modification 6'-bromotryptophan. P77 carries the 4-hydroxyproline modification. Position 81 is a 6'-bromotryptophan (W81).

Belongs to the conotoxin O1 superfamily. Contains 4 disulfide bonds. In terms of tissue distribution, expressed by the venom duct.

The protein localises to the secreted. Mu-conotoxins block voltage-gated sodium channels. This toxin reversibly blocks voltage-gated sodium channel in cephalopods, with no alteration in the voltage dependence of sodium conductance or on the kinetics of inactivation. The polypeptide is Mu-conotoxin-like Cal 12.2d (Californiconus californicus (California cone)).